The primary structure comprises 421 residues: Medium-chain specific acyl-CoA dehydrogenase, mitochondrial (421 aa).

Residues 1–25 constitute a mitochondrion transit peptide; it reads MIALFRRSCGVLRSLSHFDWRSQHT. Lys-69 carries the post-translational modification N6-acetyllysine; alternate. Lys-69 is modified (N6-succinyllysine; alternate). Lys-79 is subject to N6-acetyllysine. Position 158–167 (158–167) interacts with FAD; that stretch reads YCVTEPVAGS. Position 167 (Ser-167) interacts with octanoyl-CoA. Lys-179 is modified (N6-succinyllysine). An FAD-binding site is contributed by 191–193; the sequence is WIT. Lys-212 bears the N6-acetyllysine; alternate mark. Lys-212 carries the N6-succinyllysine; alternate modification. Ser-216 provides a ligand contact to octanoyl-CoA. N6-acetyllysine; alternate is present on residues Lys-217, Lys-259, and Lys-271. Residues Lys-217, Lys-259, and Lys-271 each carry the N6-succinyllysine; alternate modification. Asp-278 provides a ligand contact to octanoyl-CoA. Lys-279 is subject to N6-acetyllysine. Arg-281 is an octanoyl-CoA binding site. N6-acetyllysine is present on Lys-301. FAD is bound by residues 306–308 and 316–317; these read RKT and HQ. Residues Arg-349 and Thr-351 each coordinate octanoyl-CoA. Thr-351 is modified (phosphothreonine). An FAD-binding site is contributed by 374–378; it reads QIFGG. An octanoyl-CoA-binding site is contributed by Glu-401. Catalysis depends on Glu-401, which acts as the Proton acceptor. 402–405 provides a ligand contact to FAD; the sequence is GTAQ.

This sequence belongs to the acyl-CoA dehydrogenase family. As to quaternary structure, homotetramer. Interacts with the heterodimeric electron transfer flavoprotein ETF. It depends on FAD as a cofactor. In terms of processing, acetylated. Could occur at proximity of the cofactor-binding sites and reduce the catalytic activity. Could be deacetylated by SIRT3.

The protein localises to the mitochondrion matrix. The enzyme catalyses a medium-chain 2,3-saturated fatty acyl-CoA + oxidized [electron-transfer flavoprotein] + H(+) = a medium-chain (2E)-enoyl-CoA + reduced [electron-transfer flavoprotein]. It carries out the reaction pentanoyl-CoA + oxidized [electron-transfer flavoprotein] + H(+) = (2E)-pentenoyl-CoA + reduced [electron-transfer flavoprotein]. It catalyses the reaction hexanoyl-CoA + oxidized [electron-transfer flavoprotein] + H(+) = (2E)-hexenoyl-CoA + reduced [electron-transfer flavoprotein]. The catalysed reaction is octanoyl-CoA + oxidized [electron-transfer flavoprotein] + H(+) = (2E)-octenoyl-CoA + reduced [electron-transfer flavoprotein]. The enzyme catalyses decanoyl-CoA + oxidized [electron-transfer flavoprotein] + H(+) = (2E)-decenoyl-CoA + reduced [electron-transfer flavoprotein]. It carries out the reaction dodecanoyl-CoA + oxidized [electron-transfer flavoprotein] + H(+) = (2E)-dodecenoyl-CoA + reduced [electron-transfer flavoprotein]. It catalyses the reaction tetradecanoyl-CoA + oxidized [electron-transfer flavoprotein] + H(+) = (2E)-tetradecenoyl-CoA + reduced [electron-transfer flavoprotein]. The catalysed reaction is oxidized [electron-transfer flavoprotein] + hexadecanoyl-CoA + H(+) = (2E)-hexadecenoyl-CoA + reduced [electron-transfer flavoprotein]. It functions in the pathway lipid metabolism; mitochondrial fatty acid beta-oxidation. Medium-chain specific acyl-CoA dehydrogenase is one of the acyl-CoA dehydrogenases that catalyze the first step of mitochondrial fatty acid beta-oxidation, an aerobic process breaking down fatty acids into acetyl-CoA and allowing the production of energy from fats. The first step of fatty acid beta-oxidation consists in the removal of one hydrogen from C-2 and C-3 of the straight-chain fatty acyl-CoA thioester, resulting in the formation of trans-2-enoyl-CoA. Electron transfer flavoprotein (ETF) is the electron acceptor that transfers electrons to the main mitochondrial respiratory chain via ETF-ubiquinone oxidoreductase (ETF dehydrogenase). Among the different mitochondrial acyl-CoA dehydrogenases, medium-chain specific acyl-CoA dehydrogenase acts specifically on acyl-CoAs with saturated 6 to 12 carbons long primary chains. The protein is Medium-chain specific acyl-CoA dehydrogenase, mitochondrial of Bos taurus (Bovine).